Reading from the N-terminus, the 225-residue chain is Cytidylate kinase (225 aa).

11–19 (GPAAAGKST) serves as a coordination point for ATP.

It belongs to the cytidylate kinase family. Type 1 subfamily.

The protein localises to the cytoplasm. The catalysed reaction is CMP + ATP = CDP + ADP. It carries out the reaction dCMP + ATP = dCDP + ADP. The protein is Cytidylate kinase of Bacillus cereus (strain G9842).